The chain runs to 89 residues: Small ribosomal subunit protein bS20 (89 aa).

This sequence belongs to the bacterial ribosomal protein bS20 family.

Its function is as follows. Binds directly to 16S ribosomal RNA. This Stenotrophomonas maltophilia (strain K279a) protein is Small ribosomal subunit protein bS20.